The following is an 808-amino-acid chain: LisH domain-containing protein ARMC9 (808 aa).

One can recognise a LisH domain in the interval 7–39 (YEADLLGLVKEFLNFGEFQETLETFTKECKTKG). Residues 196 to 230 (ITLYKESLHNNQELLQQLQQQLMETEHKARTYKKC) are a coiled coil. Disordered regions lie at residues 576-599 (FDESIESDDEEEEKDDEEDEDALE), 650-709 (PLQR…DYCV), and 742-808 (GMEK…SYRK). A compositionally biased stretch (acidic residues) spans 579–599 (SIESDDEEEEKDDEEDEDALE). 3 stretches are compositionally biased toward polar residues: residues 655–668 (VTPSTHRVMNTVRK), 677–709 (TNTFKTSQANMSVVSSRPPTRSGSRASTSDYCV), and 775–784 (IAPQFSQSGP). Positions 785-808 (QQTSYSSSAGSSTRSRQSTQSYRK) are enriched in low complexity.

It is found in the cytoplasm. The protein resides in the cytoskeleton. It localises to the cilium basal body. The protein localises to the cell projection. Its subcellular location is the cilium. It is found in the microtubule organizing center. The protein resides in the centrosome. It localises to the centriole. Its function is as follows. Involved in ciliogenesis. It is required for appropriate acetylation and polyglutamylation of ciliary microtubules, and regulation of cilium length. Acts as a positive regulator of hedgehog (Hh)signaling. This is LisH domain-containing protein ARMC9 (armc9) from Xenopus tropicalis (Western clawed frog).